We begin with the raw amino-acid sequence, 165 residues long: Large ribosomal subunit protein uL11 (165 aa).

This sequence belongs to the universal ribosomal protein uL11 family. As to quaternary structure, component of the large ribosomal subunit. Mature ribosomes consist of a small (40S) and a large (60S) subunit. The 40S subunit contains about 32 different proteins and 1 molecule of RNA (18S). The 60S subunit contains 45 different proteins and 3 molecules of RNA (25S, 5.8S and 5S).

The protein resides in the cytoplasm. Its function is as follows. Component of the ribosome, a large ribonucleoprotein complex responsible for the synthesis of proteins in the cell. The small ribosomal subunit (SSU) binds messenger RNAs (mRNAs) and translates the encoded message by selecting cognate aminoacyl-transfer RNA (tRNA) molecules. The large subunit (LSU) contains the ribosomal catalytic site termed the peptidyl transferase center (PTC), which catalyzes the formation of peptide bonds, thereby polymerizing the amino acids delivered by tRNAs into a polypeptide chain. The nascent polypeptides leave the ribosome through a tunnel in the LSU and interact with protein factors that function in enzymatic processing, targeting, and the membrane insertion of nascent chains at the exit of the ribosomal tunnel. This is Large ribosomal subunit protein uL11 (RPL12) from Candida albicans (strain SC5314 / ATCC MYA-2876) (Yeast).